A 63-amino-acid polypeptide reads, in one-letter code: Jingdongin-1-MT1 (63 aa).

The N-terminal stretch at 1 to 22 (MFTLKKSLLLLFFLGTINLSLC) is a signal peptide. Residues 23 to 44 (EQERDADEEERRDDDEMDVEVE) constitute a propeptide, removed in mature form. A disulfide bridge links Cys-57 with Cys-63.

It belongs to the frog skin active peptide (FSAP) family. Brevinin subfamily. As to expression, expressed by the skin glands.

It is found in the secreted. Antimicrobial peptide. Active against some Gram-negative and a variety of Gram-positive bacterial strains. Active against fungus C.glabrata 090902 but not against C.neoformans 201211. Shows hemolytic activity against human erythrocytes. The protein is Jingdongin-1-MT1 of Amolops mantzorum (Sichuan torrent frog).